The chain runs to 396 residues: Tryptophan synthase beta chain (396 aa).

Position 86 is an N6-(pyridoxal phosphate)lysine (Lys86).

Belongs to the TrpB family. As to quaternary structure, tetramer of two alpha and two beta chains. Pyridoxal 5'-phosphate is required as a cofactor.

The catalysed reaction is (1S,2R)-1-C-(indol-3-yl)glycerol 3-phosphate + L-serine = D-glyceraldehyde 3-phosphate + L-tryptophan + H2O. Its pathway is amino-acid biosynthesis; L-tryptophan biosynthesis; L-tryptophan from chorismate: step 5/5. Its function is as follows. The beta subunit is responsible for the synthesis of L-tryptophan from indole and L-serine. The chain is Tryptophan synthase beta chain from Pectobacterium atrosepticum (strain SCRI 1043 / ATCC BAA-672) (Erwinia carotovora subsp. atroseptica).